The primary structure comprises 473 residues: Inactive FRIGIDA-like protein 2 (473 aa).

Coiled-coil stretches lie at residues 3 to 35 and 306 to 361; these read AAESIAASINQIDEKKQKLKKAFDDLQAHRSLL and SLKV…RATK. Residues 356–384 are disordered; sequence RKRATKFNSPANPQQPQEQKVDNKRPRVA. Positions 361 to 373 are enriched in polar residues; sequence KFNSPANPQQPQE.

The protein belongs to the Frigida family. In terms of tissue distribution, expressed at low levels throughout the plant, with slightly higher expression in developing seeds and the highest expression in pollen.

Functionally, inactive FRIGIDA-like 2 protein. The protein is Inactive FRIGIDA-like protein 2 (FRL2) of Arabidopsis thaliana (Mouse-ear cress).